The following is a 350-amino-acid chain: tRNA uridine(34) hydroxylase (350 aa).

The Rhodanese domain occupies 146 to 240 (DDPDALFIDM…YARKAREQGL (95 aa)). C200 (cysteine persulfide intermediate) is an active-site residue.

The protein belongs to the TrhO family.

It carries out the reaction uridine(34) in tRNA + AH2 + O2 = 5-hydroxyuridine(34) in tRNA + A + H2O. Functionally, catalyzes oxygen-dependent 5-hydroxyuridine (ho5U) modification at position 34 in tRNAs, the first step in 5-carboxymethoxyuridine (cmo5U) biosynthesis. May be part of an alternate pathway, which is able to bypass cmo5U biogenesis in a subset of tRNAs under aerobic conditions. The chain is tRNA uridine(34) hydroxylase from Escherichia coli (strain SMS-3-5 / SECEC).